Here is a 294-residue protein sequence, read N- to C-terminus: 4-hydroxy-tetrahydrodipicolinate synthase (294 aa).

Pyruvate is bound at residue threonine 47. The active-site Proton donor/acceptor is tyrosine 135. Lysine 163 serves as the catalytic Schiff-base intermediate with substrate. Position 205 (threonine 205) interacts with pyruvate.

This sequence belongs to the DapA family. Homotetramer; dimer of dimers.

The protein resides in the cytoplasm. The catalysed reaction is L-aspartate 4-semialdehyde + pyruvate = (2S,4S)-4-hydroxy-2,3,4,5-tetrahydrodipicolinate + H2O + H(+). It functions in the pathway amino-acid biosynthesis; L-lysine biosynthesis via DAP pathway; (S)-tetrahydrodipicolinate from L-aspartate: step 3/4. Its function is as follows. Catalyzes the condensation of (S)-aspartate-beta-semialdehyde [(S)-ASA] and pyruvate to 4-hydroxy-tetrahydrodipicolinate (HTPA). This chain is 4-hydroxy-tetrahydrodipicolinate synthase, found in Rickettsia akari (strain Hartford).